The sequence spans 354 residues: Guanine nucleotide-binding protein G(o) subunit alpha (354 aa).

The N-myristoyl glycine moiety is linked to residue Gly-2. A lipid anchor (S-palmitoyl cysteine) is attached at Cys-3. One can recognise a G-alpha domain in the interval 32–354 (KDIKLLLLGA…ANNLRGCGLY (323 aa)). The interval 35–48 (KLLLLGAGESGKST) is G1 motif. Residues 40-47 (GAGESGKS), 176-182 (LRTRVKT), 201-205 (DVGGQ), 270-273 (NKKD), and Ala-326 contribute to the GTP site. Mg(2+)-binding residues include Ser-47 and Thr-182. The segment at 174–182 (DILRTRVKT) is G2 motif. Residues 197 to 206 (FKLFDVGGQR) are G3 motif. Positions 266 to 273 (ILFLNKKD) are G4 motif. Residues 324-329 (TCATDT) form a G5 motif region.

It belongs to the G-alpha family. G(i/o/t/z) subfamily. In terms of assembly, g proteins are composed of 3 units; alpha, beta and gamma. The alpha chain contains the guanine nucleotide binding site.

Functionally, guanine nucleotide-binding proteins (G proteins) are involved as modulators or transducers in various transmembrane signaling systems. The G(o) protein function is not clear. The polypeptide is Guanine nucleotide-binding protein G(o) subunit alpha (Planorbella trivolvis (Marsh rams-horn)).